The primary structure comprises 49 residues: Sperm protamine P1 (49 aa).

The tract at residues 1–49 (MARYRCCRSHSRSRCRRRRRRSRRRRRRSCGRRRRAGYRRYTVRYRRRR) is disordered.

Belongs to the protamine P1 family. Testis.

It is found in the nucleus. It localises to the chromosome. Functionally, protamines substitute for histones in the chromatin of sperm during the haploid phase of spermatogenesis. They compact sperm DNA into a highly condensed, stable and inactive complex. The sequence is that of Sperm protamine P1 (PRM1) from Macronycteris commersonii (Commerson's roundleaf bat).